Reading from the N-terminus, the 573-residue chain is Arylsulfatase I (573 aa).

A signal peptide spans 1–23; sequence MHALTGLSLVSLLSFGYLSWDWA. Residues Asp-56, Asp-57, and Cys-94 each contribute to the Ca(2+) site. Catalysis depends on Cys-94, which acts as the Nucleophile. Residue Cys-94 is modified to 3-oxoalanine (Cys). Lys-148 contributes to the substrate binding site. His-150 is an active-site residue. His-240 contacts substrate. Residues Asn-277 and Asn-289 are each glycosylated (N-linked (GlcNAc...) asparagine). Positions 298 and 299 each coordinate Ca(2+). Position 316 (Lys-316) interacts with substrate. N-linked (GlcNAc...) asparagine glycans are attached at residues Asn-467 and Asn-497. The disordered stretch occupies residues 516–550; sequence FNGGAWGPWASDEEEEEEEEEAGRARSFSRGRRKK. A compositionally biased stretch (acidic residues) spans 526–536; that stretch reads SDEEEEEEEEE.

Belongs to the sulfatase family. It depends on Ca(2+) as a cofactor. The oxidation of Cys-94 residue to 3-oxoalanine (also known as C(alpha)-formylglycine) by SUMF1/Sulfatase-modifying factor 1, seems critical for catalytic activity.

It localises to the secreted. The protein resides in the endoplasmic reticulum. In terms of biological role, displays arylsulfatase activity at neutral pH, when co-expressed with SUMF1; arylsulfatase activity is measured in the secretion medium of retinal cell line, but no activity is recorded when measured in cell extracts. The chain is Arylsulfatase I (ARSI) from Canis lupus familiaris (Dog).